Consider the following 569-residue polypeptide: Urease subunit alpha (569 aa).

The 438-residue stretch at 132-569 folds into the Urease domain; the sequence is GGVDTHIHFI…VPLGQRYFLF (438 aa). Ni(2+) is bound by residues histidine 137, histidine 139, and lysine 220. Lysine 220 carries the N6-carboxylysine modification. Histidine 222 is a substrate binding site. Histidine 249 and histidine 275 together coordinate Ni(2+). The active-site Proton donor is histidine 323. A Ni(2+)-binding site is contributed by aspartate 363.

This sequence belongs to the metallo-dependent hydrolases superfamily. Urease alpha subunit family. As to quaternary structure, heterotrimer of UreA (gamma), UreB (beta) and UreC (alpha) subunits. Three heterotrimers associate to form the active enzyme. Requires Ni cation as cofactor. In terms of processing, carboxylation allows a single lysine to coordinate two nickel ions.

It localises to the cytoplasm. It carries out the reaction urea + 2 H2O + H(+) = hydrogencarbonate + 2 NH4(+). It participates in nitrogen metabolism; urea degradation; CO(2) and NH(3) from urea (urease route): step 1/1. This Bacillus subtilis (strain 168) protein is Urease subunit alpha.